Reading from the N-terminus, the 238-residue chain is Probable transcriptional regulatory protein SSP2054 (238 aa).

The protein belongs to the TACO1 family. YeeN subfamily.

It is found in the cytoplasm. This chain is Probable transcriptional regulatory protein SSP2054, found in Staphylococcus saprophyticus subsp. saprophyticus (strain ATCC 15305 / DSM 20229 / NCIMB 8711 / NCTC 7292 / S-41).